The sequence spans 298 residues: GTPase Era (298 aa).

Residues 8-176 (RCGRIAVIGR…VSDLLALLPE (169 aa)) enclose the Era-type G domain. The interval 16-23 (GRPNVGKS) is G1. Residue 16 to 23 (GRPNVGKS) coordinates GTP. Residues 42 to 46 (QTTRH) are G2. The segment at 63-66 (DTPG) is G3. GTP is bound by residues 63–67 (DTPGL) and 125–128 (NKID). Positions 125-128 (NKID) are G4. The interval 155 to 157 (VSA) is G5. The KH type-2 domain maps to 199–283 (VREQVMRQLG…FLETWVRVRK (85 aa)).

Belongs to the TRAFAC class TrmE-Era-EngA-EngB-Septin-like GTPase superfamily. Era GTPase family. As to quaternary structure, monomer.

The protein localises to the cytoplasm. It localises to the cell inner membrane. In terms of biological role, an essential GTPase that binds both GDP and GTP, with rapid nucleotide exchange. Plays a role in 16S rRNA processing and 30S ribosomal subunit biogenesis and possibly also in cell cycle regulation and energy metabolism. The chain is GTPase Era from Xylella fastidiosa (strain Temecula1 / ATCC 700964).